The chain runs to 568 residues: Putative ABC transporter ATP-binding protein EF_2153 (568 aa).

2 ABC transporter domains span residues 6-247 (ITFN…GIRE) and 301-535 (LRLE…ASLK). Residues 40–47 (GPSGSGKS) and 335–342 (GKNGAGKS) each bind ATP.

Belongs to the ABC transporter superfamily.

It localises to the cell membrane. Probably part of an ABC transporter complex. Responsible for energy coupling to the transport system. This Enterococcus faecalis (strain ATCC 700802 / V583) protein is Putative ABC transporter ATP-binding protein EF_2153.